The chain runs to 181 residues: Protein CRABS CLAW (181 aa).

The C4-type zinc finger occupies Cys-26–Cys-53. The interval Gly-80–Tyr-122 is disordered. Low complexity predominate over residues Ser-87–Gln-99. Residues Pro-100–Val-109 are compositionally biased toward pro residues.

Belongs to the YABBY family. In terms of tissue distribution, restricted to flowers, mostly in carpels and nectaries. Expressed at low levels in sepal primordia (buds), sepal receptacle and developing petal. Not detected in placental tissues, septum, stigma and ovules.

Its subcellular location is the nucleus. In terms of biological role, transcription factor required for the initiation of nectary development. Also involved in suppressing early radial growth of the gynoecium, in promoting its later elongation and in fusion of its carpels by regulating both cell division and expansion. Establishes the polar differentiation in the carpels by specifying abaxial cell fate in the ovary wall. Regulates both cell division and expansion. This Arabidopsis thaliana (Mouse-ear cress) protein is Protein CRABS CLAW.